Reading from the N-terminus, the 1881-residue chain is MAQTLSKISNKENASSGLRPKRFKPHQPIPTWMVRCEPLDHDSRRGRDPVRASPQAKRVRTPTPYPRHLKPAASAVVRSGNNPSHLKPASTDVVRSGPQPLCCEAKDGGVVRSCKTYNLKPAHESKAVAFSLPKTDGPTGNEPEFIAEACPSCALYDTCPNCTSKVINDDGSTDGTIPSWDQIETTPAFLSLLSNTDEEMSADELTNLAAHLRKAFETGSHPANVDYSKDQLQGLLEMAEAAVPPARRQTLPFYQQRLEARRTWREKIFNQPLEEINKILTTSKDRFQRCAAWKVILEKAVLAKEYGEEAYAYAQQALKNINSFDVNLVLKMAAATFIDHIRMMTVDNPDLVSYIPKLIVKLKPLTLKMIIDNHENTKEGWLVTLTSLAELYGMVEVAIDFVPTVVGKLFDLLMKTTSKMYSMFKSVVLATFTSESLDFTNPFWYAIAAILCFLITGAIPHNGKMKIHKNILSNATGIVAGIKAIQALAAMFSTWSNERLVNDLSSRTIALTELNNPTITADIDAVINLQRLAEVLRDEVKSHTLNPLMQPYNPILRNLMSALDKVISCCTRRKAIATKRTAPVAVILTGPPGCGKTTAAFALAKRLSQQKPSIISLDVDHHDTYTGNEVCIIDEFDSSDKVDYANFVVNMVNTNPMVLNCDLIENKGKTFTSKYVIMTSNTETPVKPTSRRAGAFYRRVMIVDVTNNAVDKWKSDNPGKAVPKWCFNKDFSHLSLSLRGTEPYSKEYVLDPTGRNHQSRRAPPPQQITLEQLAQKMVVQHTTNTSEFVTQAGDVPVFGFVCQNNEIDTVYNLLAAVKARYGANFNLYKGMVRTAHENSGCGAHVHVISREDNFRGKAFTVNRSRLESVPHLEGDSFRRSLGVVMSDKDVTTMFYYIKGKVINDQVSLTELPANQHVVTVHTVYDMAWALRRHLKWSGQWQLIKAAYEIMCYPDTAACALRNWMDSTDFSEEHVVTQFIAPGGTIILESCYGARMWATGQRLIRAGGLTEAGGPQGGVRFAGLGARNVPWSEILREFMTLISHIWSQIKGATVVLTALTFYLKRFRPRVEAKGKNKNKGPRKNTGVALTDDEYNDWKQSKAEKNLDLTVKDFLQLRHRAAMGADNTDAVKFRYWYSKKQKIYHDLENFPIIGRGGLKRELIRKGPLRPRGNDFYDEPDDWYSEGVIDGVTHKNAIVSVDDVDGMHKGYAIHIGHGVYISLKHVLTGNARILSEEPKGITISGELATFRLNNILPTAVPVGTNKPIKDPWGNPVSTDWQFKNYNTTSGNIYGACGSSCSLTRQGDCGLPYVDDHGVVVGLHAGSGGDKCPSRKLIVPYVKVDMRIRDTCTKESPTKTHKPTFSYRGLLGKETGEPRTIMKGTRLHVSPAHVDDYEECTHQPASLGAGDPRCPISLTGIMVNNLQPYTEASPGPDTATLNRVSKMLTSHMEGYVPKVHKTEEDSISAFYMLNHDTLCGPYIGARKKDHVKDGVLDKNLLDLLSSKWNRAKLGLALPHEYALGLKDELRPKDKVAVGKRRLIWGCDVGVSTVCAAAFKRVSESIMANHALGFIQVGINMDGPAVEDLFKRLERPKHDRYCVDYSKWDSTQPPKVTSQSIDILRHFTDKSPIVDSACATLKSNPIGIFNGVAFKVAGGLPSGMPLTSIINSLNHCLMVGSAVVKALEDSGVRVTWNIFDSMDLFTYGDDGVYIVPPLISSVMPKVFANLRQFGLKPTRTDKSDAEITPIPADEPVEFLKRTIVRTENGVRALLDRSSIIRQFYYIKAENTENWTVPPKRIDTPSRGQQLYNACLYASQHGEEFYTSKIVPLIERAVKLEGLHIEVPEFHQAVAAYNGYFNGTEGQPNQIAHASGGLGLSGEVFEN.

Positions 1–16 (MAQTLSKISNKENASS) are enriched in polar residues. The tract at residues 1–93 (MAQTLSKISN…SHLKPASTDV (93 aa)) is disordered. Residues 37-50 (EPLDHDSRRGRDPV) show a composition bias toward basic and acidic residues. The 157-residue stretch at 564–720 (DKVISCCTRR…DKWKSDNPGK (157 aa)) folds into the SF3 helicase domain. Position 590–597 (590–597 (GPPGCGKT)) interacts with ATP. Y1093 carries the post-translational modification O-(5'-phospho-RNA)-tyrosine. Residues 1188–1341 (GVTHKNAIVS…KLIVPYVKVD (154 aa)) enclose the Peptidase C24 domain. Active-site for 3CLpro activity residues include H1222, E1243, and C1305. One can recognise a RdRp catalytic domain in the interval 1593–1718 (HDRYCVDYSK…IVPPLISSVM (126 aa)).

As to quaternary structure, homodimer. Interacts with NTPase, protein p30 and protease-polymerase p76. In terms of assembly, interacts with capsid protein VP1 and protease-polymerase p76. Interacts with host IEF4e; this interaction plays a role in translation of viral proteins. Homooligomer. Interacts with Vpg, protein p32 and may interact with capsid protein VP1. Post-translationally, specific enzymatic cleavages in vivo yield mature proteins. Pro-Pol is first autocatalytically cleaved, then processes the whole polyprotein. In terms of processing, VPg is uridylylated by the polymerase and is covalently attached to the 5'-end of the polyadenylated genomic and subgenomic RNAs. This uridylylated form acts as a nucleotide-peptide primer for the polymerase.

It is found in the host endoplasmic reticulum membrane. The enzyme catalyses a ribonucleoside 5'-triphosphate + H2O = a ribonucleoside 5'-diphosphate + phosphate + H(+). The catalysed reaction is RNA(n) + a ribonucleoside 5'-triphosphate = RNA(n+1) + diphosphate. It catalyses the reaction Endopeptidase with a preference for cleavage when the P1 position is occupied by Glu-|-Xaa and the P1' position is occupied by Gly-|-Yaa.. Together with NTPase and NS4, initiates the formation of the replication complex. Induces the proliferation of the host smooth ER membranes forming long tubular structures. These remodeled membranes probably form the viral factories that contain the replication complex. In terms of biological role, displays NTPase activity, but no helicase activity. Induces the formation of convoluted membranes derived from the host ER. These remodeled membranes probably form the viral factories that contain the replication complex. Together with NS2 and NS4, initiates the formation of the replication complex. Its function is as follows. Probable key protein responsible for the formation of membrane alterations by the virus. Induces the formation of convoluted membranes derived from the host ER. These remodeled membranes probably form the viral factories that contain the replication complex. Together with NS2 and NTPase, initiates the formation of the replication complex. Functionally, viral genome-linked protein is covalently linked to the 5'-end of the positive-strand, negative-strand genomic RNAs and subgenomic RNA. Acts as a genome-linked replication primer. May recruit ribosome to viral RNA thereby promoting viral proteins translation. Interacts with host translation initiation complex to allow the translation of viral proteins. Protease-polymerase p76 processes the polyprotein: Pro-Pol is first released by autocleavage, then all other proteins are cleaved. Cleaves host translation initiation factor eIF4G1, eIF4G2 and PABP1 thereby inducing a shutdown of host protein synthesis. This shutdown may not prevent viral mRNA from being translated since viral Vpg replaces the cap. Also functions as an RNA-directed RNA polymerase, which replicates genomic and antigenomic viral RNA by recognizing specific signals. Also transcribes a subgenomic mRNA by initiating RNA synthesis internally on antigenomic RNA. This sgRNA codes for structural proteins. Catalyzes the covalent attachment VPg with viral RNAs. The polypeptide is Genome polyprotein (Vesicular exanthema of swine virus serotype A48 (isolate Swine/United States/A48/1948) (VESV)).